The primary structure comprises 98 residues: Small ribosomal subunit protein eS24 (98 aa).

Belongs to the eukaryotic ribosomal protein eS24 family.

This Thermococcus onnurineus (strain NA1) protein is Small ribosomal subunit protein eS24.